A 40-amino-acid chain; its full sequence is Large ribosomal subunit protein bL36B (40 aa).

It belongs to the bacterial ribosomal protein bL36 family.

The polypeptide is Large ribosomal subunit protein bL36B (Clavibacter michiganensis subsp. michiganensis (strain NCPPB 382)).